Here is a 312-residue protein sequence, read N- to C-terminus: Transcription initiation factor IIB (312 aa).

Residues 2-34 (SDSFCPDCKKHTEVAFDHSAGDTVCTECGLVLE) form a TFIIB-type zinc finger. Zn(2+) is bound by residues cysteine 6, cysteine 9, cysteine 26, and cysteine 29. A run of 2 repeats spans residues 115-192 (MADR…FIVK) and 216-290 (FCST…DLYP).

Belongs to the TFIIB family. Associates with TFIID-IIA (DA complex) to form TFIID-IIA-IIB (DAB-complex) which is then recognized by polymerase II. Interacts with TBP2.

Its subcellular location is the nucleus. Its function is as follows. General factor that plays a major role in the activation of eukaryotic genes transcribed by RNA polymerase II. The protein is Transcription initiation factor IIB (TFIIB) of Oryza sativa subsp. japonica (Rice).